The chain runs to 337 residues: Methylthioribose-1-phosphate isomerase (337 aa).

Residues 47–49, Arg-81, and Gln-184 each bind substrate; that span reads RGA. Asp-225 serves as the catalytic Proton donor. 235–236 is a substrate binding site; the sequence is NK.

Belongs to the eIF-2B alpha/beta/delta subunits family. MtnA subfamily.

It catalyses the reaction 5-(methylsulfanyl)-alpha-D-ribose 1-phosphate = 5-(methylsulfanyl)-D-ribulose 1-phosphate. Its pathway is amino-acid biosynthesis; L-methionine biosynthesis via salvage pathway; L-methionine from S-methyl-5-thio-alpha-D-ribose 1-phosphate: step 1/6. Catalyzes the interconversion of methylthioribose-1-phosphate (MTR-1-P) into methylthioribulose-1-phosphate (MTRu-1-P). This Parasynechococcus marenigrum (strain WH8102) protein is Methylthioribose-1-phosphate isomerase.